The chain runs to 122 residues: Ribosomal protein eL22-like (122 aa).

3 positions are modified to phosphoserine: S112, S118, and S120.

This sequence belongs to the eukaryotic ribosomal protein eL22 family.

The sequence is that of Ribosomal protein eL22-like (RPL22L1) from Bos taurus (Bovine).